A 287-amino-acid chain; its full sequence is Large ribosomal subunit protein uL2 (287 aa).

A disordered region spans residues 222–266 (RGIRPTVRGSAMNPNDHPHGGGEGRSPVGRDAPRTPWGKRHMGVK).

Belongs to the universal ribosomal protein uL2 family. In terms of assembly, part of the 50S ribosomal subunit. Forms a bridge to the 30S subunit in the 70S ribosome.

Functionally, one of the primary rRNA binding proteins. Required for association of the 30S and 50S subunits to form the 70S ribosome, for tRNA binding and peptide bond formation. It has been suggested to have peptidyltransferase activity; this is somewhat controversial. Makes several contacts with the 16S rRNA in the 70S ribosome. The chain is Large ribosomal subunit protein uL2 from Mycoplasma pneumoniae (strain ATCC 29342 / M129 / Subtype 1) (Mycoplasmoides pneumoniae).